A 173-amino-acid polypeptide reads, in one-letter code: Pectinesterase inhibitor 2 (173 aa).

The first 25 residues, 1 to 25 (MAAYLTNRVLMSSLMFFVMTGSLNA), serve as a signal peptide directing secretion. Cysteines 34 and 43 form a disulfide. N-linked (GlcNAc...) asparagine glycosylation is found at N39 and N63. C99 and C139 are disulfide-bonded.

Belongs to the PMEI family. As to quaternary structure, interacts with PPME1. In terms of tissue distribution, highest expression in flowers. Expressed exclusively at the pollen tube tip.

It localises to the secreted. It is found in the extracellular space. The protein resides in the apoplast. Inhibits pectin methylesterase (PME) from flowers, siliques and pollen tube. This chain is Pectinesterase inhibitor 2, found in Arabidopsis thaliana (Mouse-ear cress).